The chain runs to 159 residues: MKIKLITVGKLKEKYLKEGIAEYSKRLGRFTKLDMIELPDEKTPDKASQAENEQILKKEADRIMSKIGERDFVIALAIEGKQFPSEEFSQRISDIAVNGYSDITFIIGGSLGLDSCIKKRANLLMSFGQLTLPHQLMKLVLIEQIYRAFMIQQGSPYHK.

S-adenosyl-L-methionine-binding positions include leucine 76, glycine 108, and 127–132 (FGQLTL).

Belongs to the RNA methyltransferase RlmH family. In terms of assembly, homodimer.

It is found in the cytoplasm. It catalyses the reaction pseudouridine(1915) in 23S rRNA + S-adenosyl-L-methionine = N(3)-methylpseudouridine(1915) in 23S rRNA + S-adenosyl-L-homocysteine + H(+). Functionally, specifically methylates the pseudouridine at position 1915 (m3Psi1915) in 23S rRNA. This Streptococcus suis (strain 05ZYH33) protein is Ribosomal RNA large subunit methyltransferase H.